Here is a 589-residue protein sequence, read N- to C-terminus: LRR receptor-like serine/threonine-protein kinase FEI 2 (589 aa).

Residues 1–28 (MGICLMKRCCSWFLLISFLSALTNENEA) form the signal peptide. Over 29-236 (ISPDGEALLS…TGQGGNNPKR (208 aa)) the chain is Extracellular. LRR repeat units lie at residues 72-96 (TKRV…LGKL), 97-120 (DQLR…LGNC), 122-144 (ALEG…IGNL), 145-168 (SGLK…LGQL), and 170-193 (RLTK…LLAR). 2 N-linked (GlcNAc...) asparagine glycosylation sites follow: Asn-119 and Asn-143. Residues Asn-175, Asn-215, and Asn-219 are each glycosylated (N-linked (GlcNAc...) asparagine). The chain crosses the membrane as a helical span at residues 237-257 (LLISASATVGGLLLVALMCFW). The Cytoplasmic portion of the chain corresponds to 258-589 (GCFLYKKLGR…PSDFYDSSSD (332 aa)). Residues 304–576 (LNEEHIIGCG…VVQLLESEVM (273 aa)) enclose the Protein kinase domain. ATP-binding positions include 310 to 318 (IGCGGFGTV) and Lys-332. Phosphoserine is present on Ser-384. Asp-427 acts as the Proton acceptor in catalysis. Thr-460, Thr-461, and Thr-466 each carry phosphothreonine. Tyr-474 is modified (phosphotyrosine).

Belongs to the protein kinase superfamily. Ser/Thr protein kinase family. As to quaternary structure, interacts with the ACC synthases ACS5 and ACS9 but not ACS2, via the kinase domain. Post-translationally, autophosphorylated. Expressed in the root meristem and elongation zone, and in hypocotyls of etiolated seedlings.

It localises to the cell membrane. The catalysed reaction is L-seryl-[protein] + ATP = O-phospho-L-seryl-[protein] + ADP + H(+). The enzyme catalyses L-threonyl-[protein] + ATP = O-phospho-L-threonyl-[protein] + ADP + H(+). Its function is as follows. Involved in the signaling pathway that regulates cell wall function, including cellulose biosynthesis, likely via an 1-aminocyclopropane-1-carboxylic acid (ACC)-mediated signal (a precursor of ethylene). This Arabidopsis thaliana (Mouse-ear cress) protein is LRR receptor-like serine/threonine-protein kinase FEI 2 (FEI2).